The following is a 446-amino-acid chain: Transcriptional adapter 2-alpha (446 aa).

A ZZ-type zinc finger spans residues 12–69 (FDKPPCRGCSSYLTEPYVKCAECGPPPFLLCLQCFTRGFEYKKHQSDHTYEIMTSDFP). The Zn(2+) site is built by Cys17, Cys20, Cys31, Cys34, Cys42, Cys45, His55, and His59. In terms of domain architecture, SANT spans 70–122 (VLDPNWTAQEEMALLEAVMDCGFGNWQDVANQMCTKSKEECEKHYMKHFINNP). A disordered region spans residues 345 to 375 (DIDSGPTPAAPIPSNSGRRSAPPLNLTGLPG). Residues 359-446 (NSGRRSAPPL…LIREGYITKA (88 aa)) enclose the SWIRM domain. Residues 429-438 (KTRKIYDFLI) mediate DNA binding.

The protein localises to the nucleus. It localises to the chromosome. Its function is as follows. Component of some complex with histone acetyltransferase activity. Required for the function of some acidic activation domains, which activate transcription from a distant site. Binds double-stranded DNA. Binds dinucleosomes, probably at the linker region between neighboring nucleosomes. Plays a role in chromatin remodeling. The chain is Transcriptional adapter 2-alpha (TADA2A) from Gallus gallus (Chicken).